Here is a 311-residue protein sequence, read N- to C-terminus: Ornithine carbamoyltransferase (311 aa).

Carbamoyl phosphate-binding positions include 54–57 (STRT), glutamine 81, arginine 105, and 132–135 (HPCQ). L-ornithine is bound by residues asparagine 163, aspartate 221, and 225 to 226 (SM). Carbamoyl phosphate-binding positions include 261-262 (CL) and arginine 289.

This sequence belongs to the aspartate/ornithine carbamoyltransferase superfamily. OTCase family.

The protein resides in the cytoplasm. It carries out the reaction carbamoyl phosphate + L-ornithine = L-citrulline + phosphate + H(+). It functions in the pathway amino-acid degradation; L-arginine degradation via ADI pathway; carbamoyl phosphate from L-arginine: step 2/2. Reversibly catalyzes the transfer of the carbamoyl group from carbamoyl phosphate (CP) to the N(epsilon) atom of ornithine (ORN) to produce L-citrulline. The chain is Ornithine carbamoyltransferase from Azoarcus sp. (strain BH72).